We begin with the raw amino-acid sequence, 417 residues long: Squalene synthase (417 aa).

R52 and R77 together coordinate NADP(+). Residues D80, E83, and D84 each coordinate Mg(2+). R218 lines the NADP(+) pocket. The helical transmembrane segment at S284–Y304 threads the bilayer. 2 residues coordinate NADP(+): K315 and R317. The helical transmembrane segment at P384 to L404 threads the bilayer.

It belongs to the phytoene/squalene synthase family. Requires Mg(2+) as cofactor. Widely expressed.

The protein resides in the endoplasmic reticulum membrane. It catalyses the reaction 2 (2E,6E)-farnesyl diphosphate + NADPH + H(+) = squalene + 2 diphosphate + NADP(+). The catalysed reaction is 2 (2E,6E)-farnesyl diphosphate + NADH + H(+) = squalene + 2 diphosphate + NAD(+). The enzyme catalyses 2 (2E,6E)-farnesyl diphosphate = presqualene diphosphate + diphosphate. It carries out the reaction presqualene diphosphate + NADH + H(+) = squalene + diphosphate + NAD(+). It catalyses the reaction presqualene diphosphate + NADPH + H(+) = squalene + diphosphate + NADP(+). Its pathway is terpene metabolism; lanosterol biosynthesis; lanosterol from farnesyl diphosphate: step 1/3. Functionally, catalyzes the condensation of 2 farnesyl pyrophosphate (FPP) moieties to form squalene. Proceeds in two distinct steps. In the first half-reaction, two molecules of FPP react to form the stable presqualene diphosphate intermediate (PSQPP), with concomitant release of a proton and a molecule of inorganic diphosphate. In the second half-reaction, PSQPP undergoes heterolysis, isomerization, and reduction with NADPH or NADH to form squalene. It is the first committed enzyme of the sterol biosynthesis pathway. This is Squalene synthase (FDFT1) from Homo sapiens (Human).